The primary structure comprises 3119 residues: Huntingtin (3119 aa).

Positions 1-65 (MATLEKLMKA…LPGPAEEPLH (65 aa)) are disordered. At K9 the chain carries N6-acetyllysine. Positions 24–60 (QPPPQAPPPPPPPPPQPPQPPPQGQPPPPPPPLPGPA) are enriched in pro residues. K155 and K213 each carry N6-acetyllysine. 2 HEAT repeats span residues 183 to 220 (PYLV…SFGN) and 225 to 262 (NEIK…HSRR). K322 bears the N6-acetyllysine mark. S396, S398, and S411 each carry phosphoserine. K421 carries the N6-acetyllysine modification. The tract at residues 470-481 (GHDIITEQPRSQ) is interaction with ZDHHC17. The disordered stretch occupies residues 495-558 (DLTSAATDGD…DSAVTPSDSS (64 aa)). The segment covering 529–558 (DGTQASSPISDSSQTTTEGPDSAVTPSDSS) has biased composition (polar residues). G530 carries N-myristoyl glycine lipidation. Phosphoserine is present on residues S620 and S623. HEAT repeat units follow at residues 782-819 (FSLV…SLCS) and 882-920 (KLQE…KLFY). The interval 1146 to 1204 (KAALPSLTNPPSLSPIRRKGKEKEPGEQASTPMSPKKVGEASAASRQSDTSGPVTASKS) is disordered. A compositionally biased stretch (low complexity) spans 1149–1160 (LPSLTNPPSLSP). A phosphoserine; by CDK5 mark is found at S1159 and S1179. Positions 1189 to 1204 (ASRQSDTSGPVTASKS) are enriched in polar residues. One copy of the HEAT 5 repeat lies at 1404-1441 (LFEPLVIKALKQYTTTTSVQLQKQVLDLLAQLVQLRVN). A Phosphoserine modification is found at S1853. The Nuclear export signal motif lies at 2372 to 2381 (IVISLARLPL). The interval 2610–2637 (EEEWDEEEEEESDVPAPTSPPVSPVNSR) is disordered. A compositionally biased stretch (acidic residues) spans 2611-2622 (EEWDEEEEEESD).

This sequence belongs to the huntingtin family. As to quaternary structure, interacts with PFN1. Interacts through its N-terminus with PRPF40A. Interacts with PQBP1. Interacts with SETD2. Interacts with SH3GLB1. Interacts with SYVN. Interacts with TPR; the interaction is inhibited by forms of Huntingtin with expanded polyglutamine stretch. Interacts with ZDHHC13 (via ANK repeats). Interacts with ZDHHC17 (via ANK repeats). Interacts with F8A1/F8A2/F8A3. Found in a complex with F8A1/F8A2/F8A3, HTT and RAB5A; mediates the recruitment of HTT by RAB5A. Phosphorylation at Ser-1159 and Ser-1179 by CDK5 in response to DNA damage in nuclei of neurons protects neurons against polyglutamine expansion as well as DNA damage mediated toxicity. Post-translationally, cleaved by caspases downstream of the polyglutamine stretch. In terms of processing, myristoylated at Gly-530, following proteolytic cleavage at Asp-529. The highest level is seen throughout the brain, but it is also found in the stomach, heart, testis, adipose tissue, muscle, spleen, liver, and kidney.

The protein localises to the cytoplasm. The protein resides in the nucleus. Its subcellular location is the cytoplasmic vesicle. It localises to the autophagosome. In terms of biological role, may play a role in microtubule-mediated transport or vesicle function. Functionally, promotes the formation of autophagic vesicles. This Mus musculus (Mouse) protein is Huntingtin (Htt).